Consider the following 113-residue polypeptide: UPF0102 protein Ccon26_01140 (113 aa).

This sequence belongs to the UPF0102 family.

This Campylobacter concisus (strain 13826) protein is UPF0102 protein Ccon26_01140.